Here is a 362-residue protein sequence, read N- to C-terminus: MALSMDNIVISNEEEIYMMKAMHIPCGLYLNMVLRAAIELDLFEIIAKSTTQKLSSYEIASQIPTKNPNASSLVLERILRFLASQSFLTCNITKNDDGNVHTSYNLTPLSQSLISDKDGSSLAPFLLLHSESVVVNSCFLLKDAILQGEVPFNKAYGMNAFEYTKKDSRMNGLFNKAMQNVTCIEMKKIVECYNGFEGVKETIDVGGGLGISLASIISKYPNIKGINFDLPHVIKDAPTYEGIEHVGGDMLKSVPQGELIILKEILHNWDDEDCVKILKNCWRALPNDGKVVVIEQIQPEYPETNLLSKHLFALDISMMIMFHGGKERTKQQFEDLAKQAGFTSIKVMARAYYYWVIEFYKY.

Aspartate 229 is an S-adenosyl-L-methionine binding site. The active-site Proton acceptor is histidine 267.

Belongs to the class I-like SAM-binding methyltransferase superfamily. Cation-independent O-methyltransferase family. As to quaternary structure, homodimer. Mainly expressed in stem and petiole trichomes.

The enzyme catalyses myricetin + S-adenosyl-L-methionine = laricitrin + S-adenosyl-L-homocysteine + H(+). It participates in flavonoid metabolism. Its function is as follows. Flavonoid 3'-O-methyltransferase involved in the biosynthesis of polymethoxylated flavonoids natural products such as myricetin derivatives, aroma compounds possessing antioxidant properties and exhibiting pharmacological activities such as anti-carcinogen, anti-viral, anti-thrombotic, anti-diabetic, anti-atherosclerotic, and anti-inflammatory effects. Catalyzes S-adenosylmethionine-dependent regioselective 3'-O-methylation of flavonoids; active on various hydroxylated flavonoid substrates, including myricetin, thus producing 3'-methyl myricetin (laricitrin). This chain is Myricetin 3'-O-methyltransferase 4, found in Solanum lycopersicum (Tomato).